A 201-amino-acid chain; its full sequence is Small ribosomal subunit protein uS4 (201 aa).

The tract at residues 26–48 is disordered; that stretch reads LSKKNYPPGQHGNSRKRKTSEYG. The region spanning 92 to 155 is the S4 RNA-binding domain; that stretch reads GRLDNVVFRL…KSLEVIANSL (64 aa).

Belongs to the universal ribosomal protein uS4 family. In terms of assembly, part of the 30S ribosomal subunit. Contacts protein S5. The interaction surface between S4 and S5 is involved in control of translational fidelity.

Functionally, one of the primary rRNA binding proteins, it binds directly to 16S rRNA where it nucleates assembly of the body of the 30S subunit. With S5 and S12 plays an important role in translational accuracy. The protein is Small ribosomal subunit protein uS4 of Bacteroides thetaiotaomicron (strain ATCC 29148 / DSM 2079 / JCM 5827 / CCUG 10774 / NCTC 10582 / VPI-5482 / E50).